The primary structure comprises 132 residues: Agouti-signaling protein (132 aa).

An N-terminal signal peptide occupies residues 1–22 (MDVTRLLLATLLVFLCFFTACS). N-linked (GlcNAc...) asparagine glycosylation is present at N39. The segment at 61-87 (QISRKEAEKKRSSKKEASMKKVARPRT) is disordered. Basic and acidic residues predominate over residues 63–79 (SRKEAEKKRSSKKEASM). Intrachain disulfides connect C93–C108, C100–C114, C107–C125, C111–C132, and C116–C123. The 40-residue stretch at 93–132 (CVATRDSCKPPAPACCDPCASCQCRFFRSACSCRVLSLNC) folds into the Agouti domain.

Its subcellular location is the secreted. Its function is as follows. Involved in the regulation of melanogenesis. The binding of ASP to MC1R precludes alpha-MSH initiated signaling and thus blocks production of cAMP, leading to a down-regulation of eumelanogenesis (brown/black pigment) and thus increasing synthesis of pheomelanin (yellow/red pigment). This Macaca nigrescens (Gorontalo macaque) protein is Agouti-signaling protein (ASIP).